The chain runs to 258 residues: Malonyl-[acyl-carrier protein] O-methyltransferase (258 aa).

It belongs to the methyltransferase superfamily.

It catalyses the reaction malonyl-[ACP] + S-adenosyl-L-methionine = malonyl-[ACP] methyl ester + S-adenosyl-L-homocysteine. The protein operates within cofactor biosynthesis; biotin biosynthesis. Its function is as follows. Converts the free carboxyl group of a malonyl-thioester to its methyl ester by transfer of a methyl group from S-adenosyl-L-methionine (SAM). It allows to synthesize pimeloyl-ACP via the fatty acid synthetic pathway. The sequence is that of Malonyl-[acyl-carrier protein] O-methyltransferase from Haemophilus ducreyi (strain 35000HP / ATCC 700724).